We begin with the raw amino-acid sequence, 261 residues long: MSDILDKIIAVKREEIAAALKSAPLEELKLQASARDSRDFVGALRGKHAAGHAAVIAEVKKASPSKGVLRERFVPADIARSYAEHGAACLSVLTDEQFFQGSARYLEEARAACNLPVLRKDFIVDPYQVLEARAMGADAILLIAAALDTPLMVDLEAYAHSLGLAVLVEVHNRDELSAALELKTPLVGINNRNLRTFETTIDTTLGMLDAIPDDRIVVTESGILSRADVERMEAAGVHTFLVGEAFMRAENPGAELARMFF.

It belongs to the TrpC family.

It carries out the reaction 1-(2-carboxyphenylamino)-1-deoxy-D-ribulose 5-phosphate + H(+) = (1S,2R)-1-C-(indol-3-yl)glycerol 3-phosphate + CO2 + H2O. It functions in the pathway amino-acid biosynthesis; L-tryptophan biosynthesis; L-tryptophan from chorismate: step 4/5. This Burkholderia thailandensis (strain ATCC 700388 / DSM 13276 / CCUG 48851 / CIP 106301 / E264) protein is Indole-3-glycerol phosphate synthase.